The chain runs to 443 residues: 26S proteasome regulatory subunit rpn501 (443 aa).

Serine 209 carries the phosphoserine modification. Residues 230 to 402 (DVCKYYRAVY…QVISFKKSQN (173 aa)) enclose the PCI domain.

It belongs to the proteasome subunit p55 family.

The protein localises to the nucleus. Functionally, acts as a regulatory subunit of the 26S proteasome which is involved in the ATP-dependent degradation of ubiquitinated proteins. Required for proper proteasome assembly. The polypeptide is 26S proteasome regulatory subunit rpn501 (rpn501) (Schizosaccharomyces pombe (strain 972 / ATCC 24843) (Fission yeast)).